We begin with the raw amino-acid sequence, 424 residues long: STAM-binding protein (424 aa).

An interaction with CHMP3 region spans residues 1-127; that stretch reads MSDHGDVSLP…YTEYNEEKKK (127 aa). 2 positions are modified to phosphoserine: serine 2 and serine 48. Residues 227–231 are interaction with STAM; that stretch reads PAKPP. 3 positions are modified to phosphoserine: serine 243, serine 245, and serine 247. The region spanning 257–388 is the MPN domain; the sequence is VVVPGRLCPQ…LTDHGLEEIS (132 aa). Residues histidine 335, histidine 337, aspartate 348, histidine 350, cysteine 390, histidine 396, and histidine 398 each coordinate Zn(2+). Residues 335 to 348 carry the JAMM motif motif; that stretch reads HTHPTQTAFLSSVD.

This sequence belongs to the peptidase M67C family. As to quaternary structure, interacts with STAM. Interacts with SMAD6 and SMAD7. Interacts with CHMP3; the interaction appears to relieve the autoinhibition of CHMP3. Interacts with SMURF2 and RNF11; this interaction promotes ubiquitination. Requires Zn(2+) as cofactor. Phosphorylated after BMP type I receptor activation. Post-translationally, ubiquitinated by SMURF2 in the presence of RNF11. As to expression, ubiquitously expressed.

It localises to the nucleus. The protein resides in the membrane. Its subcellular location is the cytoplasm. The protein localises to the early endosome. Inhibited by N-ethylmaleimide. Strongly and specifically inhibited by ubiquitin variants UbV(SP.2) and UbV(SP.3). Also inhibited by UbV(SP.1); an ubiquitin variant that also inhibits STAMBPL1. Functionally, zinc metalloprotease that specifically cleaves 'Lys-63'-linked polyubiquitin chains. Does not cleave 'Lys-48'-linked polyubiquitin chains. Plays a role in signal transduction for cell growth and MYC induction mediated by IL-2 and GM-CSF. Potentiates BMP (bone morphogenetic protein) signaling by antagonizing the inhibitory action of SMAD6 and SMAD7. Has a key role in regulation of cell surface receptor-mediated endocytosis and ubiquitin-dependent sorting of receptors to lysosomes. Endosomal localization of STAMBP is required for efficient EGFR degradation but not for its internalization. Involved in the negative regulation of PI3K-AKT-mTOR and RAS-MAP signaling pathways. In Homo sapiens (Human), this protein is STAM-binding protein (STAMBP).